The sequence spans 424 residues: MPPFLITLFLFHSCCLRANGHLREGMTLLKTEFALHLYQSVAACRNETNFVISPAGVSLPLEILQFGAEGSTGQQLADALGYTVHDKRVKDFLHAVYATLPTSSQGTEMELACSLFVQVGTPLSPCFVEHVSWWANSSLEPADLSEPNSTAIQTSEGASRETAGGGPSEGPGGWPWEQVSAAFAQLVLVSTMSFQGTWRKRFSSTDTQILPFTCAYGLVLQVPMMHQTTEVNYGQFQDTAGHQVGVLELPYLGSAVSLFLVLPRDKDTPLSHIEPHLTASTIHLWTTSLRRARMDVFLPRFRIQNQFNLKSILNSWGVTDLFDPLKANLKGISGQDGFYVSEAIHKAKIEVLEEGTKASGATALLLLKRSRIPIFKADRPFIYFLREPNTGITVFFDRIQIIYQCLSSNKGSFVHYPLKNKHSF.

The signal sequence occupies residues 1–20 (MPPFLITLFLFHSCCLRANG). Asn46 carries an N-linked (GlcNAc...) asparagine glycan. A disordered region spans residues 143–174 (DLSEPNSTAIQTSEGASRETAGGGPSEGPGGW). Over residues 146-157 (EPNSTAIQTSEG) the composition is skewed to polar residues. Residues 163–173 (AGGGPSEGPGG) are compositionally biased toward gly residues.

Belongs to the serpin family.

The protein localises to the secreted. In terms of biological role, probable serine protease inhibitor. This Homo sapiens (Human) protein is Serpin E3 (SERPINE3).